Reading from the N-terminus, the 1818-residue chain is Nestin (1818 aa).

The segment at 1–14 is coil 1B; it reads WREKLEAEVQRQNL. The IF rod domain maps to 1–135; sequence WREKLEAEVQ…TLLEAENSRL (135 aa). The tract at residues 15–17 is linker 2; the sequence is YQE. A coil 2B region spans residues 18 to 135; the sequence is RVAHMESSLG…TLLEAENSRL (118 aa). Serine 133 is subject to Phosphoserine. A tail region spans residues 136 to 1818; it reads QTPGRSSQAS…DRDSWSSGED (1683 aa). Residues threonine 137 and threonine 160 each carry the phosphothreonine modification. Residue serine 180 is modified to Phosphoserine. Threonine 210 carries the phosphothreonine modification. Disordered regions lie at residues 266–309, 336–355, 377–451, and 480–787; these read EEAG…GSSI, AQET…SQGP, HETP…SPEG, and AFKK…EEDQ. Serine 288 carries the post-translational modification Phosphoserine. Residues 292–303 show a composition bias toward basic and acidic residues; it reads PVLEAKDGDSTE. The segment covering 382-398 has biased composition (polar residues); the sequence is KENCNSLRSVDENQGTL. 2 positions are modified to phosphoserine: serine 390 and serine 400. Basic and acidic residues-rich tracts occupy residues 400–427 and 434–443; these read SPEE…EKGV and LGKEDPRIED. Serine 448 is subject to Phosphoserine. The span at 495–508 shows a compositional bias: basic and acidic residues; it reads EIQRVERLIEKEGQ. The residue at position 513 (serine 513) is a Phosphoserine. Composition is skewed to basic and acidic residues over residues 521 to 536 and 565 to 586; these read TDRP…LKPV and TDRP…KEGQ. The residue at position 591 (serine 591) is a Phosphoserine. Basic and acidic residues-rich tracts occupy residues 599-614, 643-664, and 711-732; these read TDRP…LKPV and TDRP…KEGQ. Residue serine 737 is modified to Phosphoserine. Residues 744 to 773 show a composition bias toward basic and acidic residues; the sequence is ETYRLLEKENGEPLKPVEEEDQRVERLIEK. A phosphoserine mark is found at serine 803 and serine 824. Residues 866–900 form a disordered region; sequence ESLLKKGTQESLESHEDRNQETQDPQRFLEEEGQG. Basic and acidic residues predominate over residues 868–886; that stretch reads LLKKGTQESLESHEDRNQE. Phosphoserine is present on residues serine 915 and serine 957. The disordered stretch occupies residues 945–998; that stretch reads SLLERESQDSGKSLEGQEAFRCLGKEDPESLQFPEVQDQEIQRSLQQETQQTLG. Polar residues predominate over residues 986–997; that stretch reads QRSLQQETQQTL. Lysine 1043 is covalently cross-linked (Glycyl lysine isopeptide (Lys-Gly) (interchain with G-Cter in SUMO1); alternate). Lysine 1043 is covalently cross-linked (Glycyl lysine isopeptide (Lys-Gly) (interchain with G-Cter in SUMO2); alternate). Phosphoserine occurs at positions 1052, 1063, 1073, 1123, 1134, 1162, and 1238. 2 disordered regions span residues 1134 to 1262 and 1334 to 1818; these read SPEA…LEGQ and HPSL…SGED. 2 stretches are compositionally biased toward basic and acidic residues: residues 1342–1361 and 1401–1416; these read VEAK…KEAG and ASDH…RPSE. Residues 1490–1505 are compositionally biased toward acidic residues; the sequence is QDWEESREESEADELG. Serine 1495, serine 1499, and serine 1523 each carry phosphoserine. Residues 1570 to 1579 show a composition bias toward acidic residues; sequence LSSEEFEDLG. 2 positions are modified to phosphoserine: serine 1614 and serine 1623. Residues 1616 to 1636 show a composition bias toward acidic residues; that stretch reads GFADEEESGEEGEEEEHEDGT. Over residues 1686-1697 the composition is skewed to polar residues; the sequence is GLETESQDSAEP. 5 positions are modified to phosphoserine: serine 1698, serine 1700, serine 1791, serine 1814, and serine 1815. A compositionally biased stretch (low complexity) spans 1698–1708; the sequence is SGSEVSESVSS.

This sequence belongs to the intermediate filament family. As to quaternary structure, interacts with FHOD3. Forms homodimers and homotetramers in vitro. In mixtures with other intermediate filament proteins such as vimentin and alpha-internexin, preferentially forms heterodimers which can assemble to form intermediate filaments if nestin does not exceed 25%. Constitutively phosphorylated. This increases during mitosis when the cytoplasmic intermediate filament network is reorganized.

Functionally, required for brain and eye development. Promotes the disassembly of phosphorylated vimentin intermediate filaments (IF) during mitosis and may play a role in the trafficking and distribution of IF proteins and other cellular factors to daughter cells during progenitor cell division. Required for survival, renewal and mitogen-stimulated proliferation of neural progenitor cells. The sequence is that of Nestin from Mesocricetus auratus (Golden hamster).